The sequence spans 770 residues: uncharacterized protein (770 aa).

The tract at residues 736–770 is disordered; that stretch reads GSGQPGQSPANVGDDPNRMVQSSASQTQIGHVFNN. Polar residues predominate over residues 754–770; that stretch reads MVQSSASQTQIGHVFNN.

This is an uncharacterized protein from Caenorhabditis elegans.